Here is a 435-residue protein sequence, read N- to C-terminus: Eukaryotic translation initiation factor 3 subunit E (435 aa).

The PCI domain occupies 219–392 (FFNHAKGRDL…GHVVMGTQPL (174 aa)).

Belongs to the eIF-3 subunit E family. As to quaternary structure, component of the eukaryotic translation initiation factor 3 (eIF-3) complex.

The protein resides in the cytoplasm. Functionally, component of the eukaryotic translation initiation factor 3 (eIF-3) complex, which is involved in protein synthesis of a specialized repertoire of mRNAs and, together with other initiation factors, stimulates binding of mRNA and methionyl-tRNAi to the 40S ribosome. The eIF-3 complex specifically targets and initiates translation of a subset of mRNAs involved in cell proliferation. The protein is Eukaryotic translation initiation factor 3 subunit E (eIF3-S6) of Aedes aegypti (Yellowfever mosquito).